A 354-amino-acid chain; its full sequence is Uroporphyrinogen decarboxylase (354 aa).

Substrate contacts are provided by residues 30-34 (RQAGR), aspartate 79, tyrosine 154, serine 209, and histidine 333.

It belongs to the uroporphyrinogen decarboxylase family. As to quaternary structure, homodimer.

Its subcellular location is the cytoplasm. It catalyses the reaction uroporphyrinogen III + 4 H(+) = coproporphyrinogen III + 4 CO2. It participates in porphyrin-containing compound metabolism; protoporphyrin-IX biosynthesis; coproporphyrinogen-III from 5-aminolevulinate: step 4/4. Its function is as follows. Catalyzes the decarboxylation of four acetate groups of uroporphyrinogen-III to yield coproporphyrinogen-III. This Mycolicibacterium gilvum (strain PYR-GCK) (Mycobacterium gilvum (strain PYR-GCK)) protein is Uroporphyrinogen decarboxylase.